The following is a 175-amino-acid chain: Adenine phosphoribosyltransferase (175 aa).

The protein belongs to the purine/pyrimidine phosphoribosyltransferase family. In terms of assembly, homodimer.

It localises to the cytoplasm. It catalyses the reaction AMP + diphosphate = 5-phospho-alpha-D-ribose 1-diphosphate + adenine. The protein operates within purine metabolism; AMP biosynthesis via salvage pathway; AMP from adenine: step 1/1. Catalyzes a salvage reaction resulting in the formation of AMP, that is energically less costly than de novo synthesis. The polypeptide is Adenine phosphoribosyltransferase (Lactobacillus johnsonii (strain CNCM I-12250 / La1 / NCC 533)).